Reading from the N-terminus, the 459-residue chain is MDYLPIFCQLHDKPCLLVGGGEIAERKARLLLDAGAVITVNALDFNDQFRAWEKDAQLTLVHSTFDPALLNEVWLVIAATDNQDVNNHVYASASERRIFCNVVDSPERASFIMPSIIDRSPLMVAVSSGGTAPVLARLLREKLESILPQNLGKLAAFAGELRSRVKIRFCKMSARRRFWEKLFVHDRLAQALASEDRERVQQLTELLFSAPLDDRGEVTLVGAGPGDAGLLTLKGLQHLQQADIVVYDRLVSKEILNLSRRDAERIFVGKASGYHSVPQDQINQLLEEKARAGHRVVRLKGGDPFIFGRGAEELEYLQQAGVPFSVVPGITAASGCSAYSGIPLTHRDHSQGVRLITGHVKHDTDLDWSSLAAEKQTLVFYMGLQQAEHIQNKLIEQQLPETVPVAIIENGTSTKQRVLSGQLSQLGELAQQASSPSLIIIGNVVGLREKLSWFSDQTA.

The precorrin-2 dehydrogenase /sirohydrochlorin ferrochelatase stretch occupies residues 1-204; the sequence is MDYLPIFCQL…EDRERVQQLT (204 aa). NAD(+) is bound by residues 22–23 and 43–44; these read EI and LD. The residue at position 128 (Ser-128) is a Phosphoserine. A uroporphyrinogen-III C-methyltransferase region spans residues 216 to 459; it reads GEVTLVGAGP…KLSWFSDQTA (244 aa). Residue Pro-225 coordinates S-adenosyl-L-methionine. The active-site Proton acceptor is the Asp-248. The Proton donor role is filled by Lys-270. S-adenosyl-L-methionine-binding positions include 301-303, Ile-306, 331-332, Met-382, and Gly-411; these read GGD and TA.

In the N-terminal section; belongs to the precorrin-2 dehydrogenase / sirohydrochlorin ferrochelatase family. The protein in the C-terminal section; belongs to the precorrin methyltransferase family.

The enzyme catalyses uroporphyrinogen III + 2 S-adenosyl-L-methionine = precorrin-2 + 2 S-adenosyl-L-homocysteine + H(+). It carries out the reaction precorrin-2 + NAD(+) = sirohydrochlorin + NADH + 2 H(+). It catalyses the reaction siroheme + 2 H(+) = sirohydrochlorin + Fe(2+). It functions in the pathway cofactor biosynthesis; adenosylcobalamin biosynthesis; precorrin-2 from uroporphyrinogen III: step 1/1. The protein operates within cofactor biosynthesis; adenosylcobalamin biosynthesis; sirohydrochlorin from precorrin-2: step 1/1. It participates in porphyrin-containing compound metabolism; siroheme biosynthesis; precorrin-2 from uroporphyrinogen III: step 1/1. Its pathway is porphyrin-containing compound metabolism; siroheme biosynthesis; siroheme from sirohydrochlorin: step 1/1. It functions in the pathway porphyrin-containing compound metabolism; siroheme biosynthesis; sirohydrochlorin from precorrin-2: step 1/1. In terms of biological role, multifunctional enzyme that catalyzes the SAM-dependent methylations of uroporphyrinogen III at position C-2 and C-7 to form precorrin-2 via precorrin-1. Then it catalyzes the NAD-dependent ring dehydrogenation of precorrin-2 to yield sirohydrochlorin. Finally, it catalyzes the ferrochelation of sirohydrochlorin to yield siroheme. This is Siroheme synthase 2 from Pectobacterium atrosepticum (strain SCRI 1043 / ATCC BAA-672) (Erwinia carotovora subsp. atroseptica).